A 414-amino-acid chain; its full sequence is Glutamyl-tRNA reductase (414 aa).

Residues 47 to 50, serine 106, 111 to 113, and glutamine 117 each bind substrate; these read TCNR and EAQ. Cysteine 48 acts as the Nucleophile in catalysis. Residue 185–190 participates in NADP(+) binding; the sequence is GAGRTG.

This sequence belongs to the glutamyl-tRNA reductase family. In terms of assembly, homodimer.

It catalyses the reaction (S)-4-amino-5-oxopentanoate + tRNA(Glu) + NADP(+) = L-glutamyl-tRNA(Glu) + NADPH + H(+). It participates in porphyrin-containing compound metabolism; protoporphyrin-IX biosynthesis; 5-aminolevulinate from L-glutamyl-tRNA(Glu): step 1/2. Catalyzes the NADPH-dependent reduction of glutamyl-tRNA(Glu) to glutamate 1-semialdehyde (GSA). In Herpetosiphon aurantiacus (strain ATCC 23779 / DSM 785 / 114-95), this protein is Glutamyl-tRNA reductase.